The chain runs to 114 residues: uncharacterized protein (114 aa).

Residues 2 to 97 (ESEPLYKLKA…VARKVLARVL (96 aa)) enclose the HTH arsR-type domain. The H-T-H motif DNA-binding region spans 37 to 60 (GELLSSDVGLESSNLSQQLGVLRR).

This is an uncharacterized protein from Mycobacterium tuberculosis (strain CDC 1551 / Oshkosh).